An 807-amino-acid chain; its full sequence is PGC-1 and ERR-induced regulator in muscle protein 1 (807 aa).

Disordered stretches follow at residues 29-80, 121-391, and 517-548; these read QADL…EDVA, CPGQ…TPAS, and PSHEDSGSGEPTGSPFLTPEQPPVPRTAAGSR. 2 stretches are compositionally biased toward low complexity: residues 40–52 and 145–160; these read SSDIDQGDSSGSS and PAPSSPSKAPHSPESP. Residues 162–171 are compositionally biased toward polar residues; that stretch reads HSDNPQSSPD. A compositionally biased stretch (basic residues) spans 180–194; that stretch reads PGRKKRRAVGAKGTK. 3 stretches are compositionally biased toward polar residues: residues 195–211, 311–346, and 363–391; these read HSGSLDSAATQMSSPQL, KPQSDIASSTHPFTPDVSLSTLAFKCQPNTNQSTPA, and ALSTPASEPDTALSTPASEPDTALSTPAS. S198 carries the phosphoserine modification. A Phosphothreonine modification is found at T534. R548 bears the Omega-N-methylarginine mark.

Highly expressed in skeletal muscles and heart with lower levels in brown adipose tissue (at protein level). Muscle-specific expression is increased by endurance exercise.

It is found in the cytoplasm. It localises to the nucleus. In terms of biological role, regulates the expression of selective PPARGC1A/B and ESRRA/B/G target genes with roles in glucose and lipid metabolism, energy transfer, contractile function, muscle mitochondrial biogenesis and oxidative capacity. Required for the efficient induction of MT-CO2, MT-CO3, COX4I1, TFB1M, TFB2M, POLRMT and SIRT3 by PPARGC1A. Positively regulates the PPARGC1A/ESRRG-induced expression of CKMT2, TNNI3 and SLC2A4 and negatively regulates the PPARGC1A/ESRRG-induced expression of PDK4. The polypeptide is PGC-1 and ERR-induced regulator in muscle protein 1 (Perm1) (Mus musculus (Mouse)).